An 82-amino-acid chain; its full sequence is Small ribosomal subunit protein eS21y (82 aa).

M1 is subject to N-acetylmethionine.

Belongs to the eukaryotic ribosomal protein eS21 family.

This Arabidopsis thaliana (Mouse-ear cress) protein is Small ribosomal subunit protein eS21y (RPS21C).